Reading from the N-terminus, the 1063-residue chain is MEPEELTIEWYEENGLEKPIHFRCDPTRIGMKLPSPSTFTVDSVLELVGGNRMIEVVQVEDQGSVKMTLEEFVEFYKTPRDQRKNLYNVLSLEYSLTPLEDLVNSPALVRQIDWVGNIWPDALRQRWISFNGREKKSYFPHHTFPKVQNYCLMSVANCYTDFHIDFSGTSVWYHVLKGRKVFWLIPPTATNFFIYQEFIKTVSDNAFFGRSVEACHVAVLEPGDTMLIPSGWIHAVYTPDDSLVFGGNFLHSLSCQTQLRVYQVENKLNITRKFRLPYNEELLFYVMADYVKKWTGREYVRPLLVEDAKLDYVGEKWKAAGGHLKKIRFEDYNVEVTSEMVKNEEESEKDEVKVIAMHAGSSNYDNAMISKMSYTEATGLEEEAEDEDVKPETKKEAEERRDAEIDLLAATNSLIFYRNSKHDFIRNKSVPDHKLPIGHEPPVYFNDEEVSRISPRLLEELEALGAYIRRKNRVEVAEGICHPASLINLFNTVLKKRRAELTGKPFQFNQIMPRRYTRAAIETGDYDFEPVRTIEDSRRASQFKVEDFPDELLESDEPDETSRIHLPHQPSSGPLEYIPTPRGEIRENSLGFEPEYDEDMEEYDPAEQVVKEELEEEEEEEEGEEEEEEEYVAPVTRRSSTRGSASTKEEPQEEKEEKEAAPKKEKKEKKVKKEKSSKPEKDTTEAKLKKEKKKKEMERRLRDSELEAELRAAHGGKNAKSKKKPEKPAYVGGLPTAPIQNDPVVSNPYNYDPRMEMMKLGTGQLKSAYRKTKANVELHIEKNLYKLEPKRDESESREPSMEHEDSPTTPHAPYDRYSHYHTENSHFQEDQDSHRTPAKRSKYDNISVDTSESPHIPKKRSLEGRPSPYSVISPPHNRPKLSSPAMFSPSSEPRRSNDRRTSDPAVNAMKKGVYMPPMSRQDKMIAEAASASSSRHSSFSERRPSFIPDLNSSRHSSTDTPMYTPTAPARSSWLPNTSNVTRHSLDDDSPIDVVSESPIDVLNSPPFPRSITPPPVSLSELKSQSNGRKSNYSEDGKRAKIPAREAVAELKTLIGKLKTLNEA.

The region spanning 86-266 (LYNVLSLEYS…TQLRVYQVEN (181 aa)) is the JmjC domain. T160 serves as a coordination point for substrate. Fe cation-binding residues include H163 and D165. Position 180 (K180) interacts with substrate. Residue H234 coordinates Fe cation. The span at 379-389 (GLEEEAEDEDV) shows a compositional bias: acidic residues. Disordered regions lie at residues 379–400 (GLEE…AEER), 554–750 (ESDE…NPYN), and 776–1040 (VELH…KRAK). Positions 390 to 400 (KPETKKEAEER) are enriched in basic and acidic residues. Composition is skewed to acidic residues over residues 594–605 (PEYDEDMEEYDP) and 613–631 (ELEE…EEEY). Positions 636 to 646 (TRRSSTRGSAS) are enriched in low complexity. Composition is skewed to basic and acidic residues over residues 647-665 (TKEE…PKKE), 674-712 (EKSS…ELRA), 776-806 (VELH…HEDS), 813-835 (PYDR…DSHR), and 892-902 (EPRRSNDRRTS). Positions 926–937 (AEAASASSSRHS) are enriched in low complexity. Composition is skewed to polar residues over residues 950-963 (LNSS…TPMY) and 973-982 (WLPNTSNVTR). Over residues 1005–1016 (PPFPRSITPPPV) the composition is skewed to pro residues. The segment covering 1020-1030 (ELKSQSNGRKS) has biased composition (polar residues). Basic and acidic residues predominate over residues 1031–1040 (NYSEDGKRAK).

The protein belongs to the JHDM1 histone demethylase family. It depends on Fe(2+) as a cofactor.

Its subcellular location is the nucleus. The catalysed reaction is N(6),N(6)-dimethyl-L-lysyl(36)-[histone H3] + 2 2-oxoglutarate + 2 O2 = L-lysyl(36)-[histone H3] + 2 formaldehyde + 2 succinate + 2 CO2. In terms of biological role, histone demethylase that specifically demethylates 'Lys-36' of histone H3, thereby playing a central role in histone code. This chain is JmjC domain-containing histone demethylation protein 1 (jhdm-1), found in Caenorhabditis briggsae.